The sequence spans 373 residues: MLEKIREELNSYFLERREEIDIALTSILANEHTVFLGNPGVAKSQLIRAIASHINANYFEKLITRFTTEDELFGPLSIKELKDNDRFVRKTSGYLPTAEIAFLDEVFKANSSILNALLSIINERIYHNGDRIEKVPLISLFGASNELPEENELLAFYDRFLFRKVVRGIRSYENLSKLIDLEEEYKPKTIIDVEDVKKMQNEALKVDISNIKDDLIKIKLSLESEGIRISDRRFKKSVKAVKCFAYLNGKEKADENDLDILRHIYWNEPDEFYKVSVEIFKISNHFAGFALEQREILDSLMNEIKKINKDRIKLGGIEYRKCLEILGKLNSMSITLKDVKNKAIEANKPYELVEDVLKEVEGFKKYVEGLLKG.

This is an uncharacterized protein from Methanocaldococcus jannaschii (strain ATCC 43067 / DSM 2661 / JAL-1 / JCM 10045 / NBRC 100440) (Methanococcus jannaschii).